Here is a 202-residue protein sequence, read N- to C-terminus: Thymidylate kinase (202 aa).

7-14 (GIDGSGKT) contacts ATP.

Belongs to the thymidylate kinase family.

The catalysed reaction is dTMP + ATP = dTDP + ADP. Its function is as follows. Phosphorylation of dTMP to form dTDP in both de novo and salvage pathways of dTTP synthesis. The chain is Thymidylate kinase from Ehrlichia canis (strain Jake).